A 158-amino-acid polypeptide reads, in one-letter code: DNA-binding transcriptional repressor RacR (158 aa).

In terms of assembly, homooctamer.

Its function is as follows. Transcriptional regulator that represses the expression of ydaS and ydaT under normal physiological conditions. It binds to its own upstream sequence and represses the adjacent and divergently coded ydaS-ydaT operon. RacR-mediated down-regulation of ydaS and ydaT may be critical for cell survival. RacR ensures that the prophage DNA is maintained in the genome. When the expression of the racR gene is reduced, the prophage Rac is excised from the genome, possibly to counteract the lethal toxicity of YdaT. The sequence is that of DNA-binding transcriptional repressor RacR (racR) from Escherichia coli (strain K12).